A 594-amino-acid chain; its full sequence is UvrABC system protein C (594 aa).

The GIY-YIG domain occupies 14-91 (DQPGCYLMKD…IKKYDPKYNI (78 aa)). Residues 196–231 (KEVRSELEIKMYEASEKLEFERAKELRDQIAHIDAI) enclose the UVR domain.

Belongs to the UvrC family. As to quaternary structure, interacts with UvrB in an incision complex.

It is found in the cytoplasm. The UvrABC repair system catalyzes the recognition and processing of DNA lesions. UvrC both incises the 5' and 3' sides of the lesion. The N-terminal half is responsible for the 3' incision and the C-terminal half is responsible for the 5' incision. The chain is UvrABC system protein C from Bacillus cereus (strain G9842).